Here is a 477-residue protein sequence, read N- to C-terminus: Chromosomal replication initiator protein DnaA (477 aa).

Positions Met-1 to Val-87 are domain I, interacts with DnaA modulators. Positions Val-87–Ser-132 are domain II. The interval Pro-112 to Asp-131 is disordered. Residues Arg-133–Ala-349 form a domain III, AAA+ region region. The ATP site is built by Gly-177, Gly-179, Lys-180, and Thr-181. The segment at Ser-350–Met-477 is domain IV, binds dsDNA.

The protein belongs to the DnaA family. In terms of assembly, oligomerizes as a right-handed, spiral filament on DNA at oriC.

The protein resides in the cytoplasm. Its function is as follows. Plays an essential role in the initiation and regulation of chromosomal replication. ATP-DnaA binds to the origin of replication (oriC) to initiate formation of the DNA replication initiation complex once per cell cycle. Binds the DnaA box (a 9 base pair repeat at the origin) and separates the double-stranded (ds)DNA. Forms a right-handed helical filament on oriC DNA; dsDNA binds to the exterior of the filament while single-stranded (ss)DNA is stabiized in the filament's interior. The ATP-DnaA-oriC complex binds and stabilizes one strand of the AT-rich DNA unwinding element (DUE), permitting loading of DNA polymerase. After initiation quickly degrades to an ADP-DnaA complex that is not apt for DNA replication. Binds acidic phospholipids. In Clavibacter michiganensis subsp. michiganensis (strain NCPPB 382), this protein is Chromosomal replication initiator protein DnaA.